The primary structure comprises 57 residues: Small ribosomal subunit protein bS21 (57 aa).

Positions 31 to 57 (EVRKRKHYEKPSVRRKKKSEAARKRKF) are disordered. Over residues 33 to 57 (RKRKHYEKPSVRRKKKSEAARKRKF) the composition is skewed to basic residues.

Belongs to the bacterial ribosomal protein bS21 family.

The sequence is that of Small ribosomal subunit protein bS21 (rpsU) from Halalkalibacterium halodurans (strain ATCC BAA-125 / DSM 18197 / FERM 7344 / JCM 9153 / C-125) (Bacillus halodurans).